Consider the following 138-residue polypeptide: MANPEQLEEQREETRLIIEELLEDGSDPDALYTIEHHLSADDLETLEKAAVEAFKLGYEVTDPEELEVEDGDIVICCDILSECALNADLIDAQVEQLMTLAEKFDVEYDGWGTYFEDPNGEDGDDEDFVDEDDDGVRH.

Residues 114 to 138 are disordered; the sequence is YFEDPNGEDGDDEDFVDEDDDGVRH. A compositionally biased stretch (acidic residues) spans 118–138; the sequence is PNGEDGDDEDFVDEDDDGVRH.

It belongs to the RraB family. Interacts with the C-terminal region of Rne.

The protein resides in the cytoplasm. In terms of biological role, globally modulates RNA abundance by binding to RNase E (Rne) and regulating its endonucleolytic activity. Can modulate Rne action in a substrate-dependent manner by altering the composition of the degradosome. The protein is Regulator of ribonuclease activity B of Escherichia coli (strain K12).